Here is a 3595-residue protein sequence, read N- to C-terminus: MFCECPRSNLVVMCSGAFCCVLCGHRRRPRPASESDRAKYGPIVQYVEARVAHVYSGLEGRYCALEMIPITYGNKFPYCKPLPVSFVIKTLAGVQGDLTRLEETPLPGGYGVIPCWGPHLAAVGYLSPAHVGRDWFEGATHAIVHIGSYGGHERPTTIPFNTTGGDVYQLGTCTIVETIDHVEWHAGVKPGTAICPLDRIDFAQKVITAFPEGFLANKAWLGDKRGTLKVEADPETAALSFEHGRCWLKLFPDPACELTTASTFGYQLNCGVQGKYIARRLQTNGLKLVQNQEGKFIAYTFHRGSWLGHIGHADESVPPDCQIIARFDVLPYNEWSPLPLLKLPGKTYFGGNASSVSWPEWKYDEQLLYADSLTAGFCWLQLFPPLSRKSEAQRAILAQQVNNYGVTGTYLEYRLRQYGIVLAECDYGEHYIYAAASDSSIRHISPVPIHDRHHVFVTRLTARFGAFDEGFDLGFGTRYGRRRGGGKKSGQSSGVRAPGRTTPDLAGDWGKAVDDQEKTASKVTTDKAMSTSEPAVVQVGCETKPVADAAAVPASVNSTGCALLPVQADPCCTAGVAAKESEPKAVAAPSIPITFGAPAGETLPVAASPLVVKKDKRCISVKLTAKKALPKETFIPPPDGGCGVHAFAAIQYHINTGHWPEQKPVVNWAYEAWTTNEDIGHMICSTETPAALEPCLHARYVVRLDSDHWVVDHYPNRPMCFVEACAHGWCSSLLSEPTGEEGEHLVDCSALYDCLGKFRNGTEFADTVLGLSKTAHCCNKRVPTPRKQAIMSLLNRPNCVPCIAPPSQVRTVDPSQPAAPLPPVPRPRKRKAAAQQVSKVPSEQDPSLAHDPPEKPDSVRPPKLGYLDRAWNNMLARTHKLHNLQQRVFGLYPQLLSMLLPSGARPSTPRLLGCYFSMAVAMFFLFLGSPLFILCAVLAGVIAPSARYPKILCCCLVVVYICTLFADAISSVCDNDDADCRAFLSDLGDRYSTNQPVYITPGPATFFLAVSRNFFVVSVALFPLHLLLLMVDVLLVIGVLCMDGYCFRCFSRCVRKAPEEVSLLTIPQSRVSRRFLLDICDFYSAPPVDIIRLATGLNGCFRGDYSPIGSSTSVITADKIDVKKVSCRTVCSFPSCPSEAVKVLHVLSVRGQMCAHNEQKVEKVDALPCKNPLFPYDLSSKKIVPVDSGTYEILSSIGCDMSHLVIGDGDFFKVMGVPRPSPFTVMRLRACRVVGGGRIFRTALAAAWVLFFVCAGYWVQMSTPCGIGTNDPFCKSSFGVPTYVNQGVCHGQYCASSKGVSRATSILTVRNPAVAPYIVLAACLVYLASVYVPGIIEVSLLVLNALLPAGPAISALRTLVMIIAAPHLSMKYIAFFCCTTAFVDFTSVVVVLTALLVGWILARYTGIGGFVTPYDIHDVVKSQRDGVAVANAPPNTYLGAVRRAALTGKPAFFVANNTGIVLEGLLREKTRASNSVSVYGVTCGSGGLFSDGNNTVCLTATHVCGNNKAVVDYQGTRYEAVFTTKGDYASAVVPIPGAFPPLKFAPQSYTGRAYWYANTGVETGFVGTTGCLVFSGPGDSGSPIITPDGLIVGVHTGSDSKGSGAYTTPNGLTVSGPLSLKEMGAHYEGPIVDVPTRLPRNVHNDTKSVPQPLARLLESSINLEGGLGTIQLIIVAVVLWKYAVDPLSIPFVVAFFLLNEILPKCLIRCFYNYSLFCLAAFSPLASRIFFIRLLTAALNRNPTALICHACFAGIAVLNDFIILGDIRLALRFTSFYVVGVNHDAIAIAVIGALVCVAACCLELFGLPQMASVIGCHGSFDPTFLSRYVHEGIRQGVSSGFGTESLSTALACALSEDELNFLAQAVDHKAIVSAIHVHKTLQDYILSKNAKILRASLASVHANHNASKALASLDKFLQGTSTQLKPGDPVILLGSTSAELVSVFSGDSEYIAEPIRSHPVAGTICTLCVVQAKCEGGLVTQVNGKFSPAKYLAVAGKVLADHPDYKLENDGRFPRTREDRVKDSVQVDTVDIGSHTFKKMWNKTTGDVWYDIIMPESAANPLAVHDLDSAVAAIGMSKEIPEKDMNRLRAIISKLQGLVSSEALNLLTAAGCTSADRSGLVITLDYAKIITHHARTRAFSSIDFKVVSPDEAMRTARLSPSPQPIIASFSDDKFLLLRRHPPSLLDVLTKGLDATCREPLHSPGDQGIDGYLWDFEAPHSKEAIWLSNQIISACAARRGDAPGCYPYKLHPVRGDPYRVGNVLKNTRFGDVTYTAVSDSDSPWLKVASINSGGCPVVTDRVLGSTIPVGSEIYLPTLPESVLDYLDSRPDCPTYYTQHGCEAAALQDLKKFNLSTQGFILPEVLNIVRNYLLGTIGYRPAIYKPSTVPSNDSHAGINGLSFSTKTLQALPDIDELCEKAIAEVWQTVTPVTLKKQFCSKAKTRTILGTNAMASLALRALLSGVTQGFQLAGKNSPICLGKSKFDPCTFEVKGRCLETDLASCDRSTPAIVRHFATKLLFEMACAERALPLYVVNCCHDLIVTQTSAATKRGGLSSGDPVTSIANTIYSLVLYVQHMVLTLLENGHPLSLKFLSGKLNFQDLYKLQAFIVYSDDLILLNESDDLPNFERWVPHLELALGFKVDPKKTVITSNPGFLGCEYRHGWLVPQKQRVLAALAYHVNAKDVHTYYINATAILNDASALSAFEPDWFDDLVIGLADCARKDGYSFPGPAAFREFFSRVSGYQFEGKEVQVCSICCSTARTTSLCGMALCDFCAHRHYHPGCHVLSSFCKHVIGSNTCKMCSIPILKDRTKFAELLASDQYRSVCTVEVTVVDGYTDAAPGRYSYQKKQYMLRKERRGCPLDLPDGKYSMKLLPNSCSGICVPKAQENATLSNFVVGPPGSGKTTFISNLLDDDAVVYCPTHVSLIAYSKSLPAARFSVPRGQDPAEYGTPALSGPTLQLLSAGYVPGAKHYLDEACYANPFDVFKLLSKTPITAIGDPAQLTPVGFDTPLYVFELMKKNALHAIYRFGQNICNAIQPCYSTKLVSQRQGDTEVIFQTKFAPRGKVLTPYHRDRVGAAVTIDSSQGSTYDVVTLYLPTKGSLTLARGLVGITRARERLYVYDPHHQLAKYFNLQPSSTTIRPHAVVIDGKARVMLSDKCYAAPEDFPGMLCTARPATAADRKILEETCLKLDFLESGSLSPLPRVCYNLGFYYSPDITKLLPIPSELAKHWPVATNRNNPEWPNRLVVSATRLSPLSHPAVCAGYYVGDSLFVGTPNVTSYWLTKFLDGRAVPMEDSVYSTGRFEMDIRDYLDSAERDFAAKHPHAFIGDTKGTTVGGCHHITSQYLPHVLPADSVVKVGVSKPGVAHKALCTVTDIYLPMLGSYTSPPTQSKVYKVNVDHKACKLMVWRDQTMYFQEGFDYHTLVDALRFVRLSSDGVYRVAPELTPMIGNRRLDLGAKPLRPVDLAITPWDDPKCEFLVTHASPFDMSDEFLLVNAFDFIKEDLLGKSVTPVYFYKRLSEPLHFDQNLPPHVGAILSKAPRFISLAKVFNFCFTPTACHCKVSVKTATGDHMCKCSLSSDEFLSRFNPTVGTP.

Residues 3 to 23 (CECPRSNLVVMCSGAFCCVLC) form a C4-type; atypical zinc finger. Residues 56-164 (SGLEGRYCAL…PTTIPFNTTG (109 aa)) enclose the Peptidase C31 domain. Catalysis depends on for Nsp1-alpha papain-like cysteine proteinase activity residues cysteine 63 and histidine 130. Residues 239 to 350 (LSFEHGRCWL…LKLPGKTYFG (112 aa)) enclose the Peptidase C32 domain. Catalysis depends on for Nsp1-beta papain-like cysteine proteinase activity residues cysteine 246 and histidine 309. Active-site for Nsp2 cysteine proteinase activity residues include cysteine 378 and histidine 430. Residues 482–527 (RRGGGKKSGQSSGVRAPGRTTPDLAGDWGKAVDDQEKTASKVTTDK) form a disordered region. A compositionally biased stretch (basic and acidic residues) spans 511–520 (KAVDDQEKTA). Positions 633–736 (TFIPPPDGGC…HGWCSSLLSE (104 aa)) constitute a Peptidase C33 domain. Residues 808 to 862 (QVRTVDPSQPAAPLPPVPRPRKRKAAAQQVSKVPSEQDPSLAHDPPEKPDSVRPP) form a disordered region. A compositionally biased stretch (basic and acidic residues) spans 851–860 (DPPEKPDSVR). Helical transmembrane passes span 922–942 (MFFL…AGVI), 951–971 (ILCC…AISS), 1019–1039 (VALF…VIGV), 1239–1259 (IFRT…GYWV), 1316–1336 (PYIV…PGII), 1345–1365 (ALLP…IIAA), and 1381–1401 (AFVD…GWIL). The segment at 922–1039 (MFFLFLGSPL…MVDVLLVIGV (118 aa)) is HD1. The interval 1239–1399 (IFRTALAAAW…VVLTALLVGW (161 aa)) is HD2. The 201-residue stretch at 1464-1664 (GLLREKTRAS…RLLESSINLE (201 aa)) folds into the Peptidase S32 domain. Active-site charge relay system; for 3C-like serine proteinase activity residues include histidine 1502, aspartate 1527, and serine 1580. 4 helical membrane-spanning segments follow: residues 1673-1693 (IIVA…PFVV), 1711-1731 (YNYS…IFFI), 1744-1764 (ALIC…IILG), and 1784-1804 (AIAI…LELF). Residues 1687–1804 (LSIPFVVAFF…CVAACCLELF (118 aa)) are HD3. The NiRAN domain maps to 2083–2253 (DMNRLRAIIS…YPYKLHPVRG (171 aa)). The RdRp catalytic domain occupies 2491–2625 (GRCLETDLAS…LNESDDLPNF (135 aa)). Positions 2746–2812 (GKEVQVCSIC…IPILKDRTKF (67 aa)) constitute an AV ZBD domain. Cysteine 2752, cysteine 2755, cysteine 2765, cysteine 2770, cysteine 2773, histidine 2777, histidine 2779, cysteine 2782, cysteine 2789, histidine 2791, cysteine 2798, and cysteine 2801 together coordinate Zn(2+). The region spanning 2862–3022 (DLPDGKYSMK…VFELMKKNAL (161 aa)) is the (+)RNA virus helicase ATP-binding domain. 2897–2904 (GPPGSGKT) serves as a coordination point for ATP. A (+)RNA virus helicase C-terminal domain is found at 3023–3157 (HAIYRFGQNI…DGKARVMLSD (135 aa)). The AV-Nsp11N/CoV-Nsp15M domain maps to 3196–3292 (SGSLSPLPRV…LTKFLDGRAV (97 aa)). In terms of domain architecture, NendoU spans 3294–3416 (MEDSVYSTGR…MVWRDQTMYF (123 aa)). Active-site residues include histidine 3325, histidine 3340, and lysine 3369.

Belongs to the arteriviridae polyprotein family. In terms of processing, specific enzymatic cleavages in vivo by its own proteases yield mature proteins. There are two alternative pathways for processing. Either nsp4-5 is cleaved, which represents the major pathway or the nsp5-6 and nsp6-7 are processed, which represents the minor pathway. The major pathway occurs when nsp2 acts as a cofactor for nsp4.

It is found in the host membrane. It localises to the host cytoplasm. Its subcellular location is the host perinuclear region. The catalysed reaction is RNA(n) + a ribonucleoside 5'-triphosphate = RNA(n+1) + diphosphate. The enzyme catalyses ATP + H2O = ADP + phosphate + H(+). It carries out the reaction uridylyl-uridylyl-ribonucleotide-RNA = a 3'-end uridylyl-2',3'-cyclophospho-uridine-RNA + a 5'-end dephospho-ribonucleoside-RNA. The replicase polyprotein 1ab is a multifunctional protein: it contains the activities necessary for the transcription of negative stranded RNA, leader RNA, subgenomic mRNAs and progeny virion RNA as well as proteinases responsible for the cleavage of the polyprotein into functional products. Its function is as follows. The Nsp1 chain is essential for viral subgenomic mRNA synthesis. Functionally, the 3C-like serine proteinase chain is responsible for the majority of cleavages as it cleaves the C-terminus of the polyprotein. In terms of biological role, plays a role in viral transcription/replication and prevents the simultaneous activation of host cell dsRNA sensors, such as MDA5/IFIH1, OAS, and PKR. Acts by degrading the 5'-polyuridines generated during replication of the poly(A) region of viral genomic and subgenomic RNAs. Catalyzes a two-step reaction in which a 2'3'-cyclic phosphate (2'3'-cP) is first generated by 2'-O transesterification, which is then hydrolyzed to a 3'-phosphate (3'-P). If not degraded, poly(U) RNA would hybridize with poly(A) RNA tails and activate host dsRNA sensors. The helicase chain, which contains a zinc finger structure, displays RNA and DNA duplex-unwinding activities with 5' to 3' polarity. This chain is Replicase polyprotein 1ab (rep), found in Simian hemorrhagic fever virus (SHFV).